A 193-amino-acid chain; its full sequence is Sporulation-specific transcriptional regulator GerR (193 aa).

The region spanning 1 to 61 is the HTH myb-type domain; that stretch reads MTITRQDAWT…RWNSYVRKQY (61 aa). The H-T-H motif DNA-binding region spans 35-57; sequence FEEVGRALTRTAAACGFRWNSYV. Residues 122–177 adopt a coiled-coil conformation; the sequence is AQEFQLEREKLKEQIQSLQKELEDLRSENQTLRNQLEMTEEDYKALIDIMDRARKM.

The protein belongs to the RsfA transcriptional regulator family.

In terms of biological role, transcriptional factor that regulates the expression of several late sporulation genes. Controls genes of both sigma-E and sigma-K regulons, acting alone on some genes and in conjunction with SpoIIID or GerE on others. Regulates, directly or indirectly, the expression of genes encoding coat proteins such as cgeA, cotB, cotC, cotG, cotU and cotY. Controls late sporulation genes in two ways: directly, by binding to the promoter region of genes such as cotB, cotU and spoVIF, and acting directly on their transcription, and indirectly, through the activation of SpoVIF, which stabilizes the transcriptional activator GerE and consequently induces the expression of the GerE-dependent genes, such as cotC and cotG. Its effect is strongly positive on spoVIF, cotC, and cotG, weakly positive on cotB, and negative on cotU. The polypeptide is Sporulation-specific transcriptional regulator GerR (Bacillus subtilis (strain 168)).